A 462-amino-acid chain; its full sequence is Elongation factor 1-alpha 1 (462 aa).

Gly-2 carries the n,N,N-trimethylglycine modification. The region spanning 5–242 (KTHINIVVIG…DCILPPTRPT (238 aa)) is the tr-type G domain. Residues 14–21 (GHVDSGKS) are G1. 14 to 21 (GHVDSGKS) contacts GTP. Lys-36 carries the post-translational modification N6,N6,N6-trimethyllysine; alternate. N6,N6-dimethyllysine; alternate is present on Lys-36. An N6-methyllysine; alternate modification is found at Lys-36. Lys-55 is subject to N6,N6-dimethyllysine. The segment at 70-74 (GITID) is G2. Lys-79 is modified (N6,N6,N6-trimethyllysine; by EEF1AKMT1). The G3 stretch occupies residues 91–94 (DAPG). Residue 153-156 (NKMD) coordinates GTP. A G4 region spans residues 153-156 (NKMD). Lys-165 is subject to N6,N6,N6-trimethyllysine; alternate; by EEF1AKMT3. At Lys-165 the chain carries N6,N6-dimethyllysine; alternate; by EEF1AKMT3. At Lys-165 the chain carries N6-acetyllysine; alternate. At Lys-165 the chain carries N6-methyllysine; alternate; by EEF1AKMT3. Lys-172 bears the N6-acetyllysine mark. A GTP-binding site is contributed by 194–196 (SGW). Positions 194–196 (SGW) are G5. N6-acetyllysine is present on Lys-273. At Ser-300 the chain carries Phosphoserine; by TGFBR1. 5-glutamyl glycerylphosphorylethanolamine is present on Glu-301. Lys-318 carries the post-translational modification N6,N6,N6-trimethyllysine; by EEF1AKMT2. 5-glutamyl glycerylphosphorylethanolamine is present on Glu-374. Lys-385 is covalently cross-linked (Glycyl lysine isopeptide (Lys-Gly) (interchain with G-Cter in ubiquitin)). An N6-acetyllysine; alternate modification is found at Lys-392. Position 392 is an N6-succinyllysine; alternate (Lys-392). Thr-432 bears the Phosphothreonine; by PASK mark. At Lys-439 the chain carries N6-acetyllysine.

It belongs to the TRAFAC class translation factor GTPase superfamily. Classic translation factor GTPase family. EF-Tu/EF-1A subfamily. Found in a nuclear export complex with XPO5, EEF1A1, Ran and aminoacylated tRNA. Interacts with PARP1 and TXK. Interacts with KARS1. May interact with ERGIC2. Interacts with IFIT1 (via TPR repeats 4-7). Interacts with DLC1, facilitating distribution to the membrane periphery and ruffles upon growth factor stimulation. Interacts with ZPR1; the interaction occurs in a epidermal growth factor (EGF)-dependent manner. Interacts with PPP1R16B. Interacts with SPHK1 and SPHK2; both interactions increase SPHK1 and SPHK2 kinase activity. Interacts with guanyl-nucleotide exchange factor EEF1B2. Interacts (via middle-region) with HTATIP2 (via N-terminus); the interaction is direct and competes with EEF1A1 binding to guanyl-nucleotide exchange factor EEF1B2, thereby inhibiting GDP for GTP exchange and reactivation of EEF1A1. Interacts with tRNA. ISGylated. Post-translationally, phosphorylated by TXK. Phosphorylation by PASK increases translation efficiency. Phosphorylated by ROCK2. Phosphorylation by TGFBR1 inhibits translation elongation. In terms of processing, trimethylated at Lys-79 by EEF1AKMT1. Methylated at Lys-165 by EEF1AKMT3, methylation by EEF1AKMT3 is dynamic as well as inducible by stress conditions, such as ER-stress, and plays a regulatory role on mRNA translation. Trimethylated at Lys-318 by EEF1AKMT2. Mono-, di-, and trimethylated at Lys-36 by EEF1AKMT4; trimethylated form is predominant. Methylation by EEF1AKMT4 contributes to the fine-tuning of translation rates for a subset of tRNAs. Trimethylated at Gly-2 by METTL13. Mono- and dimethylated at Lys-55 by METTL13; dimethylated form is predominant. Ubiquitinated at Lys-385 by RNF14 in response to ribosome collisions (ribosome stalling), leading to its degradation by the proteasome and rescue of stalled ribosomes.

Its subcellular location is the cytoplasm. It is found in the nucleus. It localises to the nucleolus. The protein resides in the cell membrane. The enzyme catalyses GTP + H2O = GDP + phosphate + H(+). Translation elongation factor that catalyzes the GTP-dependent binding of aminoacyl-tRNA (aa-tRNA) to the A-site of ribosomes during the elongation phase of protein synthesis. Base pairing between the mRNA codon and the aa-tRNA anticodon promotes GTP hydrolysis, releasing the aa-tRNA from EEF1A1 and allowing its accommodation into the ribosome. The growing protein chain is subsequently transferred from the P-site peptidyl tRNA to the A-site aa-tRNA, extending it by one amino acid through ribosome-catalyzed peptide bond formation. Also plays a role in the positive regulation of IFNG transcription in T-helper 1 cells as part of an IFNG promoter-binding complex with TXK and PARP1. Also plays a role in cytoskeleton organization by promoting actin bundling. This is Elongation factor 1-alpha 1 (EEF1A1) from Bos taurus (Bovine).